Consider the following 355-residue polypeptide: Tabersonine 16-O-methyltransferase (355 aa).

Residues 198 to 201 (IGGG), aspartate 222, 222 to 223 (DL), 242 to 243 (DM), and lysine 256 contribute to the S-adenosyl-L-methionine site. The active-site Proton acceptor is histidine 260.

It belongs to the class I-like SAM-binding methyltransferase superfamily. Cation-independent O-methyltransferase family. COMT subfamily. Homodimer. As to expression, expressed in leaves and flowers. Detected in stems and roots. In leaves, expressed in epidermal cells.

It localises to the cytoplasm. It catalyses the reaction 16-hydroxytabersonine + S-adenosyl-L-methionine = 16-methoxytabersonine + S-adenosyl-L-homocysteine + H(+). The protein operates within alkaloid biosynthesis; vindoline biosynthesis. Its function is as follows. 16-O-methyltransferase involved in the biosynthesis of vindoline. Highly specific for 16-hydroxytabersonine. No activity with tabersonine, 3-hydroxytyramine, 4-hydroxytyramine, 5-hydroxytryptamine (5HT), 2,3-dihydro-3-hydroxytabersonine, lochnericine, hoerhammericine, 16-hydroxy-2,3-dihydro-3-hydroxytabersonine, 16-hydroxylochnericine, 16-hydroxyhoerhammericine, quercetin, kaempferol and caffeic acid as substrates. The polypeptide is Tabersonine 16-O-methyltransferase (Catharanthus roseus (Madagascar periwinkle)).